We begin with the raw amino-acid sequence, 314 residues long: Oxalate oxidoreductase subunit beta (314 aa).

Cys-24, Cys-27, Cys-52, and Cys-225 together coordinate [4Fe-4S] cluster.

In terms of assembly, dimer of heterotrimer of one alpha, one beta and one delta subunit. The cofactor is [4Fe-4S] cluster.

It catalyses the reaction oxidized 2[4Fe-4S]-[ferredoxin] + oxalate = reduced 2[4Fe-4S]-[ferredoxin] + 2 CO2. In terms of biological role, catalyzes the anaerobic oxidation of oxalate using a broad range of electron acceptors, including ferredoxin and the nickel-dependent carbon monoxide dehydrogenase. Does not require coenzyme A as cosubstrate. Enables anaerobic growth on oxalate which is used as energy source by the bacteria. This chain is Oxalate oxidoreductase subunit beta, found in Moorella thermoacetica (strain ATCC 39073 / JCM 9320).